Here is a 355-residue protein sequence, read N- to C-terminus: Protein RecA (355 aa).

An ATP-binding site is contributed by 67–74; it reads GPESSGKT.

The protein belongs to the RecA family.

Its subcellular location is the cytoplasm. Its function is as follows. Can catalyze the hydrolysis of ATP in the presence of single-stranded DNA, the ATP-dependent uptake of single-stranded DNA by duplex DNA, and the ATP-dependent hybridization of homologous single-stranded DNAs. It interacts with LexA causing its activation and leading to its autocatalytic cleavage. The protein is Protein RecA of Shewanella baltica (strain OS195).